The primary structure comprises 450 residues: Sulfide:quinone oxidoreductase, mitochondrial (450 aa).

FAD-binding positions include 53-54 (AG), glutamate 75, glutamine 83, and valine 118. Residues lysine 134 and lysine 173 each carry the N6-acetyllysine modification. The Cysteine persulfide intermediate role is filled by cysteine 201. Cysteines 201 and 379 form a disulfide. Residue aspartate 336 participates in FAD binding. The residue at position 343 (serine 343) is a Phosphoserine. Residue 344 to 347 (KTAA) coordinates FAD. Cysteine 379 serves as the catalytic Cysteine persulfide intermediate.

Belongs to the SQRD family. FAD serves as cofactor.

Its subcellular location is the mitochondrion. It carries out the reaction ubiquinone-10 + hydrogen sulfide + sulfite + 2 H(+) = ubiquinol-10 + thiosulfate. The enzyme catalyses a quinone + hydrogen sulfide + glutathione + H(+) = S-sulfanylglutathione + a quinol. It catalyses the reaction ubiquinone-10 + hydrogen sulfide + glutathione + H(+) = S-sulfanylglutathione + ubiquinol-10. In terms of biological role, catalyzes the oxidation of hydrogen sulfide with the help of a quinone, such as ubiquinone-10, giving rise to thiosulfate and ultimately to sulfane (molecular sulfur) atoms. Requires an additional electron acceptor; can use sulfite, sulfide or cyanide (in vitro). It is believed the in vivo electron acceptor is glutathione. The chain is Sulfide:quinone oxidoreductase, mitochondrial from Mus musculus (Mouse).